We begin with the raw amino-acid sequence, 167 residues long: NADH-ubiquinone oxidoreductase chain 4 (167 aa).

Helical transmembrane passes span 2-22 (FIGA…LFCL), 44-64 (LLPL…ALPP), and 86-106 (IILV…MLIM).

This sequence belongs to the complex I subunit 4 family.

The protein resides in the mitochondrion membrane. The enzyme catalyses a ubiquinone + NADH + 5 H(+)(in) = a ubiquinol + NAD(+) + 4 H(+)(out). Functionally, core subunit of the mitochondrial membrane respiratory chain NADH dehydrogenase (Complex I) that is believed to belong to the minimal assembly required for catalysis. Complex I functions in the transfer of electrons from NADH to the respiratory chain. The immediate electron acceptor for the enzyme is believed to be ubiquinone. The chain is NADH-ubiquinone oxidoreductase chain 4 (MT-ND4) from Carlito syrichta (Philippine tarsier).